The chain runs to 34 residues: uncharacterized protein (34 aa).

The segment covering 1–12 (MFSHFEVSENRP) has biased composition (basic and acidic residues). The interval 1 to 21 (MFSHFEVSENRPRKQPRRKRI) is disordered.

This is an uncharacterized protein from Saccharomyces cerevisiae (strain ATCC 204508 / S288c) (Baker's yeast).